The following is a 620-amino-acid chain: 1-deoxy-D-xylulose-5-phosphate synthase (620 aa).

Residues histidine 80 and 121-123 (GHS) each bind thiamine diphosphate. Aspartate 152 contributes to the Mg(2+) binding site. Thiamine diphosphate-binding positions include 153-154 (GA), asparagine 181, tyrosine 288, and glutamate 370. Residue asparagine 181 participates in Mg(2+) binding.

It belongs to the transketolase family. DXPS subfamily. As to quaternary structure, homodimer. Mg(2+) is required as a cofactor. The cofactor is thiamine diphosphate.

The enzyme catalyses D-glyceraldehyde 3-phosphate + pyruvate + H(+) = 1-deoxy-D-xylulose 5-phosphate + CO2. It participates in metabolic intermediate biosynthesis; 1-deoxy-D-xylulose 5-phosphate biosynthesis; 1-deoxy-D-xylulose 5-phosphate from D-glyceraldehyde 3-phosphate and pyruvate: step 1/1. Catalyzes the acyloin condensation reaction between C atoms 2 and 3 of pyruvate and glyceraldehyde 3-phosphate to yield 1-deoxy-D-xylulose-5-phosphate (DXP). In Salmonella choleraesuis (strain SC-B67), this protein is 1-deoxy-D-xylulose-5-phosphate synthase.